Here is an 891-residue protein sequence, read N- to C-terminus: Alanine--tRNA ligase (891 aa).

Residues H564, H568, C681, and H685 each coordinate Zn(2+).

The protein belongs to the class-II aminoacyl-tRNA synthetase family. It depends on Zn(2+) as a cofactor.

The protein localises to the cytoplasm. It carries out the reaction tRNA(Ala) + L-alanine + ATP = L-alanyl-tRNA(Ala) + AMP + diphosphate. Its function is as follows. Catalyzes the attachment of alanine to tRNA(Ala) in a two-step reaction: alanine is first activated by ATP to form Ala-AMP and then transferred to the acceptor end of tRNA(Ala). Also edits incorrectly charged Ser-tRNA(Ala) and Gly-tRNA(Ala) via its editing domain. The protein is Alanine--tRNA ligase of Methylorubrum extorquens (strain PA1) (Methylobacterium extorquens).